The following is a 230-amino-acid chain: Heptaprenylglyceryl phosphate synthase (230 aa).

Lys-12 lines the sn-glycerol 1-phosphate pocket. Mg(2+) contacts are provided by Asp-14 and Ser-40. Residues Tyr-159–Gly-164, Gly-189, and Gly-209–Asn-210 contribute to the sn-glycerol 1-phosphate site.

It belongs to the GGGP/HepGP synthase family. Group I subfamily. Homodimer. Requires Mg(2+) as cofactor.

The catalysed reaction is sn-glycerol 1-phosphate + all-trans-heptaprenyl diphosphate = 3-heptaprenyl-sn-glycero-1-phosphate + diphosphate. The protein operates within membrane lipid metabolism; glycerophospholipid metabolism. In terms of biological role, prenyltransferase that catalyzes in vivo the transfer of the heptaprenyl moiety of heptaprenyl pyrophosphate (HepPP; 35 carbon atoms) to the C3 hydroxyl of sn-glycerol-1-phosphate (G1P), producing heptaprenylglyceryl phosphate (HepGP). This reaction is an ether-bond-formation step in the biosynthesis of archaea-type G1P-based membrane lipids found in Bacillales. In Bacillus pumilus (strain SAFR-032), this protein is Heptaprenylglyceryl phosphate synthase.